Reading from the N-terminus, the 59-residue chain is Large ribosomal subunit protein bL32 (59 aa).

It belongs to the bacterial ribosomal protein bL32 family.

The polypeptide is Large ribosomal subunit protein bL32 (Synechococcus sp. (strain RCC307)).